The chain runs to 308 residues: D-alanine--D-alanine ligase (308 aa).

The 198-residue stretch at 104 to 301 (KQIWQGSDLP…FDELCVAILE (198 aa)) folds into the ATP-grasp domain. ATP is bound at residue 130–185 (IAELGLPVIIKPVHEGSSVGMSKVEKAEDFAAAIEKATQHDAVVMAEKWITGREFT). Residues Asp-255, Glu-268, and Asn-270 each coordinate Mg(2+).

Belongs to the D-alanine--D-alanine ligase family. Mg(2+) is required as a cofactor. The cofactor is Mn(2+).

Its subcellular location is the cytoplasm. The enzyme catalyses 2 D-alanine + ATP = D-alanyl-D-alanine + ADP + phosphate + H(+). Its pathway is cell wall biogenesis; peptidoglycan biosynthesis. Functionally, cell wall formation. In Acinetobacter baumannii (strain SDF), this protein is D-alanine--D-alanine ligase.